A 736-amino-acid chain; its full sequence is 1,4-alpha-glucan branching enzyme GlgB (736 aa).

Asp-419 (nucleophile) is an active-site residue. Glu-472 serves as the catalytic Proton donor.

It belongs to the glycosyl hydrolase 13 family. GlgB subfamily. Monomer.

The enzyme catalyses Transfers a segment of a (1-&gt;4)-alpha-D-glucan chain to a primary hydroxy group in a similar glucan chain.. The protein operates within glycan biosynthesis; glycogen biosynthesis. Its function is as follows. Catalyzes the formation of the alpha-1,6-glucosidic linkages in glycogen by scission of a 1,4-alpha-linked oligosaccharide from growing alpha-1,4-glucan chains and the subsequent attachment of the oligosaccharide to the alpha-1,6 position. The chain is 1,4-alpha-glucan branching enzyme GlgB from Rhizobium meliloti (strain 1021) (Ensifer meliloti).